The chain runs to 359 residues: 3-dehydroquinate synthase (359 aa).

NAD(+) is bound by residues 72-77 (DGEQYK), 106-110 (GVIGD), 130-131 (TT), Lys143, Lys152, and 170-173 (CLKT). Residues Glu185, His248, and His265 each contribute to the Zn(2+) site.

It belongs to the sugar phosphate cyclases superfamily. Dehydroquinate synthase family. Co(2+) serves as cofactor. The cofactor is Zn(2+). NAD(+) is required as a cofactor.

Its subcellular location is the cytoplasm. The catalysed reaction is 7-phospho-2-dehydro-3-deoxy-D-arabino-heptonate = 3-dehydroquinate + phosphate. It functions in the pathway metabolic intermediate biosynthesis; chorismate biosynthesis; chorismate from D-erythrose 4-phosphate and phosphoenolpyruvate: step 2/7. Its function is as follows. Catalyzes the conversion of 3-deoxy-D-arabino-heptulosonate 7-phosphate (DAHP) to dehydroquinate (DHQ). The polypeptide is 3-dehydroquinate synthase (Photobacterium profundum (strain SS9)).